A 340-amino-acid polypeptide reads, in one-letter code: Histidinol-phosphate aminotransferase (340 aa).

Lysine 204 bears the N6-(pyridoxal phosphate)lysine mark.

This sequence belongs to the class-II pyridoxal-phosphate-dependent aminotransferase family. Histidinol-phosphate aminotransferase subfamily. Pyridoxal 5'-phosphate is required as a cofactor.

It carries out the reaction L-histidinol phosphate + 2-oxoglutarate = 3-(imidazol-4-yl)-2-oxopropyl phosphate + L-glutamate. The protein operates within amino-acid biosynthesis; L-histidine biosynthesis; L-histidine from 5-phospho-alpha-D-ribose 1-diphosphate: step 7/9. The sequence is that of Histidinol-phosphate aminotransferase from Thermococcus gammatolerans (strain DSM 15229 / JCM 11827 / EJ3).